The primary structure comprises 104 residues: Precursor of CEP11 (104 aa).

The signal sequence occupies residues 1-27 (MAKTRRVIYLFLTIVLLFCELIDEAQG). Positions 28 to 85 (SRFRCHHSEDYSCKKRSSHHHHHHHHHQQQQHHHKDTPPEELQGSIKTRRSKDIYGLN) are excised as a propeptide. Positions 37–104 (DYSCKKRSSH…SPGVGHLIKT (68 aa)) are disordered. The span at 41-62 (KKRSSHHHHHHHHHQQQQHHHK) shows a compositional bias: basic residues. Hydroxyproline occurs at positions 92 and 96. Residues 101 to 104 (LIKT) constitute a propeptide that is removed on maturation.

This sequence belongs to the C-terminally encoded plant signaling peptide (CEP) family. In terms of assembly, interacts with CEP receptors (e.g. CEPR1 and CEPR2). Post-translationally, the mature small signaling peptide is generated by proteolytic processing of the longer precursor. Expressed in lateral root primordia and in lateral roots excluding the meristem region.

It is found in the secreted. The protein localises to the extracellular space. The protein resides in the apoplast. Its function is as follows. Extracellular signaling peptide that may regulate primary root growth rate and systemic nitrogen (N)-demand signaling. Mediates up-regulation of genes involved in N uptake and assimilation pathways. The sequence is that of Precursor of CEP11 from Arabidopsis thaliana (Mouse-ear cress).